The sequence spans 185 residues: ATP synthase subunit b (185 aa).

A helical membrane pass occupies residues 27 to 47 (GALIWKGLNILAFLGIVYYFG).

The protein belongs to the ATPase B chain family. As to quaternary structure, F-type ATPases have 2 components, F(1) - the catalytic core - and F(0) - the membrane proton channel. F(1) has five subunits: alpha(3), beta(3), gamma(1), delta(1), epsilon(1). F(0) has three main subunits: a(1), b(2) and c(10-14). The alpha and beta chains form an alternating ring which encloses part of the gamma chain. F(1) is attached to F(0) by a central stalk formed by the gamma and epsilon chains, while a peripheral stalk is formed by the delta and b chains.

It localises to the cell inner membrane. F(1)F(0) ATP synthase produces ATP from ADP in the presence of a proton or sodium gradient. F-type ATPases consist of two structural domains, F(1) containing the extramembraneous catalytic core and F(0) containing the membrane proton channel, linked together by a central stalk and a peripheral stalk. During catalysis, ATP synthesis in the catalytic domain of F(1) is coupled via a rotary mechanism of the central stalk subunits to proton translocation. Its function is as follows. Component of the F(0) channel, it forms part of the peripheral stalk, linking F(1) to F(0). This Aquifex aeolicus (strain VF5) protein is ATP synthase subunit b.